The following is a 75-amino-acid chain: UPF0352 protein VP2129 (75 aa).

The protein belongs to the UPF0352 family.

The sequence is that of UPF0352 protein VP2129 from Vibrio parahaemolyticus serotype O3:K6 (strain RIMD 2210633).